Consider the following 154-residue polypeptide: Keratin-associated protein 9-4 (154 aa).

15 repeat units span residues cysteine 8–threonine 12, cysteine 13–threonine 17, cysteine 18–threonine 22, cysteine 37–serine 41, cysteine 42–serine 46, cysteine 51–threonine 55, cysteine 56–threonine 60, cysteine 61–threonine 65, cysteine 70–serine 74, cysteine 75–proline 79, cysteine 80–threonine 84, cysteine 85–serine 89, cysteine 129–alanine 133, cysteine 134–threonine 138, and cysteine 148–phenylalanine 152. The tract at residues cysteine 8 to phenylalanine 152 is 15 X 5 AA repeats of C-C-[RQVGE]-[SPTN]-[TASPF].

The protein belongs to the KRTAP type 9 family. Interacts with hair keratins.

Its function is as follows. In the hair cortex, hair keratin intermediate filaments are embedded in an interfilamentous matrix, consisting of hair keratin-associated proteins (KRTAP), which are essential for the formation of a rigid and resistant hair shaft through their extensive disulfide bond cross-linking with abundant cysteine residues of hair keratins. The matrix proteins include the high-sulfur and high-glycine-tyrosine keratins. This is Keratin-associated protein 9-4 (KRTAP9-4) from Homo sapiens (Human).